A 313-amino-acid chain; its full sequence is Non-functional target of rapamycin complex subunit LST8-2 (313 aa).

WD repeat units follow at residues Met1–Ser35, Tyr38–Pro76, Ser82–Glu121, Arg123–Glu162, Glu166–Thr205, Ala215–Val255, and Gly258–Val297.

This sequence belongs to the WD repeat LST8 family.

Probable non-functional protein. The sequence is that of Non-functional target of rapamycin complex subunit LST8-2 from Arabidopsis thaliana (Mouse-ear cress).